The following is a 241-amino-acid chain: Uracil-DNA glycosylase (241 aa).

Catalysis depends on aspartate 71, which acts as the Proton acceptor.

This sequence belongs to the uracil-DNA glycosylase (UDG) superfamily. UNG family.

Its subcellular location is the cytoplasm. It carries out the reaction Hydrolyzes single-stranded DNA or mismatched double-stranded DNA and polynucleotides, releasing free uracil.. Its function is as follows. Excises uracil residues from the DNA which can arise as a result of misincorporation of dUMP residues by DNA polymerase or due to deamination of cytosine. The polypeptide is Uracil-DNA glycosylase (Xanthomonas campestris pv. campestris (strain 8004)).